The primary structure comprises 486 residues: Cardiolipin synthase A (486 aa).

Helical transmembrane passes span 3–23 (TVYT…IAGV) and 38–58 (MAWL…YLAV). 2 PLD phosphodiesterase domains span residues 219–246 (MDLR…VDPR) and 399–426 (EGGL…DMRS). Active-site residues include His-224, Lys-226, Asp-231, His-404, Lys-406, and Asp-411.

Belongs to the phospholipase D family. Cardiolipin synthase subfamily. ClsA sub-subfamily.

It localises to the cell inner membrane. It catalyses the reaction 2 a 1,2-diacyl-sn-glycero-3-phospho-(1'-sn-glycerol) = a cardiolipin + glycerol. Functionally, catalyzes the reversible phosphatidyl group transfer from one phosphatidylglycerol molecule to another to form cardiolipin (CL) (diphosphatidylglycerol) and glycerol. This Shigella dysenteriae serotype 1 (strain Sd197) protein is Cardiolipin synthase A.